We begin with the raw amino-acid sequence, 320 residues long: ATP-dependent 6-phosphofructokinase (320 aa).

Residue Gly12 participates in ATP binding. ADP is bound by residues 22-26 (RGVVR) and 55-60 (RYSVSD). Residues 73–74 (RF) and 103–106 (GDGS) contribute to the ATP site. Asp104 lines the Mg(2+) pocket. 126–128 (TID) provides a ligand contact to substrate. The Proton acceptor role is filled by Asp128. Residue Arg155 coordinates ADP. Substrate-binding positions include Arg163 and 170 to 172 (MGR). ADP-binding positions include 186–188 (GCE), Lys212, and 214–216 (KKH). Residues Glu223, Arg244, and 250–253 (HIQR) each bind substrate.

This sequence belongs to the phosphofructokinase type A (PFKA) family. ATP-dependent PFK group I subfamily. Prokaryotic clade 'B1' sub-subfamily. In terms of assembly, homotetramer. It depends on Mg(2+) as a cofactor.

It is found in the cytoplasm. It catalyses the reaction beta-D-fructose 6-phosphate + ATP = beta-D-fructose 1,6-bisphosphate + ADP + H(+). It participates in carbohydrate degradation; glycolysis; D-glyceraldehyde 3-phosphate and glycerone phosphate from D-glucose: step 3/4. Allosterically activated by ADP and other diphosphonucleosides, and allosterically inhibited by phosphoenolpyruvate. Its function is as follows. Catalyzes the phosphorylation of D-fructose 6-phosphate to fructose 1,6-bisphosphate by ATP, the first committing step of glycolysis. The protein is ATP-dependent 6-phosphofructokinase of Sodalis glossinidius (strain morsitans).